A 160-amino-acid chain; its full sequence is Endoribonuclease YbeY (160 aa).

Residues H125, H129, and H135 each contribute to the Zn(2+) site.

Belongs to the endoribonuclease YbeY family. Zn(2+) serves as cofactor.

The protein localises to the cytoplasm. Single strand-specific metallo-endoribonuclease involved in late-stage 70S ribosome quality control and in maturation of the 3' terminus of the 16S rRNA. In Leuconostoc citreum (strain KM20), this protein is Endoribonuclease YbeY.